Reading from the N-terminus, the 248-residue chain is Transcription factor MYBC1 (248 aa).

Positions 102–161 (TLKRPRLVWTPQLHKRFVDAVGHLGIKNAVPKTIMQLMSVEGLTRENVASHLQKYRLYLR) form a DNA-binding region, myb-like GARP.

In terms of tissue distribution, expressed in roots, leaves, stems, petioles, filaments, stigma, pedicels, sepals, anthers, petals, and siliques.

It is found in the nucleus. Probable transcription factor that acts as a negative regulator of freezing tolerance via a CBF-independent pathway. The chain is Transcription factor MYBC1 from Arabidopsis thaliana (Mouse-ear cress).